Consider the following 119-residue polypeptide: Beta-2-microglobulin (119 aa).

The N-terminal stretch at 1-20 is a signal peptide; it reads MARSVVVALLVLLSLSGLEA. The Ig-like C1-type domain occupies 25 to 114; it reads PKIQVYSRHP…VTFPTPKTVK (90 aa). An intrachain disulfide couples C45 to C100.

This sequence belongs to the beta-2-microglobulin family. Heterodimer of an alpha chain and a beta chain. Beta-2-microglobulin is the beta-chain of major histocompatibility complex class I molecules.

The protein localises to the secreted. Functionally, component of the class I major histocompatibility complex (MHC). Involved in the presentation of peptide antigens to the immune system. The chain is Beta-2-microglobulin (B2M) from Lagothrix lagotricha (Brown woolly monkey).